Here is a 718-residue protein sequence, read N- to C-terminus: MADLEEGFALTAVPLGSGPDGPLGVEQSGKTDQFLVTDSGRTVILYKVSDQKPLGSWSVKQGQIITCPAVCNFQTGEYIVVHDNKVLRIWNNEDVNLDKVFKATLSAEVYRIHSIQGTEPLVLFKEGAVRGLEALLAEPQQKIETVISDEEVIKWTKFFMVFRHPVLIFITEKHGNYFVYVQKFNSRILSKYTLLLGQEEKCVIQSFSTSVGRKFISLMSLSSDGCVYETLIPIHPSEPEKNQRLVQSQLLKSVVSGSARNGVALAILDQDHIAVLGAPLPASKECLSVWNTKFQTLQTSKELPQGTSGQLWYYGENLFMLHGKFLTVVPFKCEVSSLAGALGKLKHSQDPGIHATPHFVNWETSQGCGLGSQNSEQSKRILRRRKVEVSVQPEVPASTQLLATIQKDSEKHIEVELRKFLATKRTPDFHTIIGDVIIGLLGRCKAEPSFYPCNCLMQLVQTHVLSYSLCPGLMEFALEKTDVQILQLCLQQFPDIPESVTCACLKVFLSIGDDTLQDTDINMESVSDYMDPVQDGEMEEQTAFLQNGFSPEEDNCDSCAQKLKEKPQAAADESTSCPVTPKRAALLNAVLHSAYSETFLLPHLKDIPAQHSTLFLQYLYFLYLKCSENATMTLPGTHPPTLSQIMDWICLLLDANFTVVVMIPEAKRLLLSLYKFVKSQISICSELNKIEVSFRELQKLNQEKNNRELYSIEVLELF.

Residue Lys-346 is modified to N6-methyllysine.

In terms of assembly, interacts with UTP4. Interacts with FBL/fibrillarin in a transcription-dependent manner. May associate with the proposed t-UTP subcomplex of the SSU processome containing at least UTP4, WDR43, HEATR1, UTP15, WDR75.

Its subcellular location is the nucleus. The protein resides in the nucleolus. Functionally, ribosome biogenesis factor. May be required for both optimal rDNA transcription and small subunit (SSU) pre-rRNA processing at sites A', A0, 1 and 2b. The protein is Nucleolar protein 11 (NOL11) of Bos taurus (Bovine).